The following is a 100-amino-acid chain: MAERFSSRLADVIRRPLITEKATRALEMNQYTFEVDPRAAKPDIKAAVEHLFDVKVIGVSTMNPPRRTRRVGRFAGRRSQVKKAVVRLAEGNSIQLFPES.

This sequence belongs to the universal ribosomal protein uL23 family. Part of the 50S ribosomal subunit. Contacts protein L29, and trigger factor when it is bound to the ribosome.

In terms of biological role, one of the early assembly proteins it binds 23S rRNA. One of the proteins that surrounds the polypeptide exit tunnel on the outside of the ribosome. Forms the main docking site for trigger factor binding to the ribosome. The sequence is that of Large ribosomal subunit protein uL23 from Synechococcus sp. (strain RCC307).